We begin with the raw amino-acid sequence, 382 residues long: uncharacterized protein (382 aa).

This is an uncharacterized protein from Frog virus 3 (isolate Goorha) (FV-3).